The primary structure comprises 352 residues: Popeye domain-containing protein 1 (352 aa).

At 1-38 (MSNTTSALPSSVPAVSLDPNATLCQDWEQSHHLLFHLA) the chain is on the extracellular side. N-linked (GlcNAc...) asparagine glycosylation is found at Asn3 and Asn20. Residues 39-59 (NLSLGLGFLIPTTLALHMIFL) form a helical membrane-spanning segment. Arg60 is a topological domain (cytoplasmic). The helical transmembrane segment at 61-81 (LLLMTGCSLFIAWATLYRCTL) threads the bilayer. Residue Asp82 is a topological domain, extracellular. The helical transmembrane segment at 83–103 (VMVWNVVFLLVNFMHFFFLLY) threads the bilayer. The Cytoplasmic segment spans residues 104-352 (KRRPIKIDRE…NVSKTTKKDI (249 aa)). Residues 299-352 (ILRGGSTGSSLQKNPLTKTSTTMKPIEEGLEDDVFESESPTTSQNVSKTTKKDI) form a disordered region. Polar residues-rich tracts occupy residues 306-321 (GSSLQKNPLTKTSTTM) and 336-346 (ESPTTSQNVSK).

Belongs to the popeye family. In terms of tissue distribution, expressed in skeletal muscle (at protein level).

Its subcellular location is the lateral cell membrane. It localises to the cell junction. It is found in the tight junction. The protein localises to the membrane. The protein resides in the cell membrane. Its subcellular location is the sarcolemma. It localises to the caveola. Cell adhesion molecule involved in the establishment and/or maintenance of cell integrity. Involved in skeletal muscle and heart development as well as in the maintenance of heart function. May play a role in vamp3-mediated vesicular transport and recycling of receptor molecules. Involved in the formation and regulation of the tight junction (TJ) paracellular permeability barrier in epithelial cells. May induce primordial adhesive contact and aggregation of epithelial cells in a Ca(2+)-independent manner. May be involved in epithelial movement during corneal sheet formation and regeneration. May play a role in the regulation of cell shape and movement by modulating the Rho-GTPase activity. May also be involved in striated muscle regeneration and in the regulation of cell spreading. The sequence is that of Popeye domain-containing protein 1 (popdc1) from Danio rerio (Zebrafish).